The chain runs to 247 residues: tRNA (guanine-N(7)-)-methyltransferase (247 aa).

Residues glycine 70, 93–94 (EI), 128–129 (NA), and leucine 148 each bind S-adenosyl-L-methionine. Aspartate 151 is an active-site residue. 226–228 (SEE) contacts S-adenosyl-L-methionine.

Belongs to the class I-like SAM-binding methyltransferase superfamily. TrmB family.

The protein localises to the nucleus. It catalyses the reaction guanosine(46) in tRNA + S-adenosyl-L-methionine = N(7)-methylguanosine(46) in tRNA + S-adenosyl-L-homocysteine. Its pathway is tRNA modification; N(7)-methylguanine-tRNA biosynthesis. Functionally, catalyzes the formation of N(7)-methylguanine at position 46 (m7G46) in tRNA. This Drosophila pseudoobscura pseudoobscura (Fruit fly) protein is tRNA (guanine-N(7)-)-methyltransferase.